We begin with the raw amino-acid sequence, 217 residues long: Growth factor receptor-bound protein 2 (217 aa).

Methionine 1 carries the N-acetylmethionine modification. Residues 1–58 (MEAIAKYDFKATADDELSFKRGDILKVLNEECDQNWYKAELNGKDGFIPKNYIEMKPH) enclose the SH3 1 domain. N6-acetyllysine occurs at positions 6, 50, and 109. The SH2 domain occupies 60–152 (WFFGKIPRAK…NQQIFLRDIE (93 aa)). Lysine 109 is covalently cross-linked (Glycyl lysine isopeptide (Lys-Gly) (interchain with G-Cter in ubiquitin)). Residues 156–215 (QQPTYVQALFDFDPQEDGELGFRRGDFIHVMDNSDPNWWKGACHGQTGMFPRNYVTPVNR) enclose the SH3 2 domain. Tyrosine 209 carries the phosphotyrosine modification. The residue at position 211 (threonine 211) is a Phosphothreonine.

This sequence belongs to the GRB2/sem-5/DRK family. In terms of assembly, homodimer. Associates (via SH2 domain) with activated EGF and PDGF receptors (tyrosine phosphorylated). Interacts with PDGFRA (tyrosine phosphorylated); the interaction may be indirect. Also associates to other cellular Tyr-phosphorylated proteins such as SIT1, IRS1, IRS2, IRS4, SHC and LNK; probably via the concerted action of both its SH2 and SH3 domains. It also seems to interact with RAS in the signaling pathway leading to DNA synthesis. Interacts with SOS1. Forms a complex with MUC1 and SOS1, through interaction of the SH3 domains with SOS1 and the SH2 domain with phosphorylated MUC1. Interacts with phosphorylated MET. Interacts with phosphorylated TOM1L1. Interacts with the phosphorylated C-terminus of SH2B2. Interacts with phosphorylated SIT1, LAX1, LAT, LAT2 and LIME1 upon TCR and/or BCR activation. Interacts with NISCH, PTPNS1 and REPS2. Interacts with syntrophin SNTA1. Interacts (via SH3 domains) with REPS1. Interacts (via SH3 domains) with PIK3C2B. Interacts with CBL and CBLB. Interacts with AJUBA and CLNK. Interacts (via SH2 domain) with TEK/TIE2 (tyrosine phosphorylated). Interacts with SHB, INPP5D/SHIP1, SKAP1 and SKAP2. Interacts with PTPN11. Interacts with PRNP. Interacts with RALGPS1. Interacts with HCST. Interacts with KDR. Interacts with FLT1 (tyrosine-phosphorylated). Interacts with GAPT and PTPRE. Interacts (via SH2 domain) with KIF26A. Interacts (via SH3 2) with GAB2. Interacts with ADAM15. Interacts with THEMIS2. Interacts (via SH2 domain) with AXL (phosphorylated). Interacts (via SH2 domain) with KIT (phosphorylated). Interacts with PTPRJ and BCR. Interacts with PTPN23. Interacts with FLT4 (tyrosine phosphorylated). Interacts with EPHB1 and SHC1; activates the MAPK/ERK cascade to regulate cell migration. Part of a complex including TNK2, GRB2, LTK and one receptor tyrosine kinase (RTK) such as AXL and PDGFRL, in which GRB2 promotes RTK recruitment by TNK2. Interacts (via SH2 domain) with CSF1R (tyrosine phosphorylated). Interacts with ERBB4. Interacts with NTRK1 (phosphorylated upon ligand-binding). Interacts with PTK2/FAK1 (tyrosine phosphorylated). Interacts with PTK2B/PYK2 (tyrosine phosphorylated). Interacts (via SH3 domains) with GAREM1 isoform 1 (via proline-rich domain and tyrosine phosphorylated); the interaction occurs upon EGF stimulation. Interacts with DAB2. Interacts with TESPA1. Interacts with PLCG1, LAT and THEMIS upon TCR activation in thymocytes; the association is weaker in the absence of TESPA1. Interacts with CD28. Interacts with RAB13; may recruit RAB13 to the leading edge of migrating endothelial cells where it can activate RHOA. Interacts with ASAP3 (phosphorylated form). Interacts (via SH2 domain) with PTPRH (phosphorylated form). Interacts with PTPRO (phosphorylated form). Interacts with PTPRB (phosphorylated form). Interacts (via SH3 domain 2) with PRR14 (via proline-rich region). Interacts with FCRL6 (tyrosine phosphorylated form). Interacts with RHEX (via tyrosine-phosphorylated form). Interacts with DENND2B. Interacts with SPRY2. Interacts with LRRC8A. Interacts with PEAK1. Interacts with CD28. Interacts with FCRL1. Interacts with PCNA. Interacts with CD19. Interacts with BECN1. Interacts with RAD51; the interaction inhibits RAD51 ATPase to stabilize RAD51-DNA complex at stalled replication forks. Interacts with MRE11; this interaction recruits MRE11 to the DNA damage sites. Interacts with RIPK1 ans SQSTM1; these interactions play a critical role in regulating programmed necrosis. Interacts with AGO2; this interaction is important for the formation of a ternary complex containing GRB2, AGO2 and DICER1. Interacts with TIGIT; this interaction inhibits PI3K and MAPK signaling cascades. Interacts with CD226; this interaction leads to activation of VAV1, PI3K and PLCG1. Interacts (via SH2-domain) with SCIMP; this interaction is dependent on phosphorylation of SCIMP 'Tyr-69'. As to quaternary structure, interacts with SOS1; this interaction competes with GRB2 to bind SOS1 via its N-terminal SH3 domain. In terms of assembly, (Microbial infection) Interacts (via SH3 domain) with hepatitis E virus/HEV ORF3 protein. (Microbial infection) Interacts with hepatitis C virus/HCV protein NS5A via its SH3 domains. As to quaternary structure, (Microbial infection) Interacts with herpes simplex virus 1 protein UL46. In terms of assembly, (Microbial infection) Interacts with B19 parvovirus protein 11K. Phosphorylation of Tyr-209 in the C-terminal SH3 domain reduces its binding to SOS1. In terms of processing, ubiquitinated by RNF173, leading to proteasomal degradation and inhibition of the RAF/MEK/ERK pathway. In the nucleus, polyubiquitinated by RBBP6 at Lys-109 at DNA damage sites.

It localises to the nucleus. It is found in the cytoplasm. The protein resides in the endosome. Its subcellular location is the golgi apparatus. Non-enzymatic adapter protein that plays a pivotal role in precisely regulated signaling cascades from cell surface receptors to cellular responses, including signaling transduction and gene expression. Thus, participates in many biological processes including regulation of innate and adaptive immunity, autophagy, DNA repair or necroptosis. Controls signaling complexes at the T-cell antigen receptor to facilitate the activation, differentiation, and function of T-cells. Mechanistically, engagement of the TCR leads to phosphorylation of the adapter protein LAT, which serves as docking site for GRB2. In turn, GRB2 establishes a a connection with SOS1 that acts as a guanine nucleotide exchange factor and serves as a critical regulator of KRAS/RAF1 leading to MAPKs translocation to the nucleus and activation. Functions also a role in B-cell activation by amplifying Ca(2+) mobilization and activation of the ERK MAP kinase pathway upon recruitment to the phosphorylated B-cell antigen receptor (BCR). Plays a role in switching between autophagy and programmed necrosis upstream of EGFR by interacting with components of necrosomes including RIPK1 and with autophagy regulators SQSTM1 and BECN1. Regulates miRNA biogenesis by forming a functional ternary complex with AGO2 and DICER1. Functions in the replication stress response by protecting DNA at stalled replication forks from MRE11-mediated degradation. Mechanistically, inhibits RAD51 ATPase activity to stabilize RAD51 on stalled replication forks. Additionally, directly recruits and later releases MRE11 at DNA damage sites during the homology-directed repair (HDR) process. Its function is as follows. Does not bind to phosphorylated epidermal growth factor receptor (EGFR) but inhibits EGF-induced transactivation of a RAS-responsive element. Acts as a dominant negative protein over GRB2 and by suppressing proliferative signals, may trigger active programmed cell death. Mechanistically, inhibits RAS-ERK signaling and downstream cell proliferation by competing with GRB2 for SOS1 binding and thus by regulating SOS1 membrane recruitment. The polypeptide is Growth factor receptor-bound protein 2 (GRB2) (Homo sapiens (Human)).